The following is a 68-amino-acid chain: KCNQ1 downstream neighbor protein (68 aa).

The interval 28-68 (GVASGCSPSKASQEARGKEKCPTLNGQPQWSALFTLPPQRE) is disordered.

Shows reduced expression in Wilms' tumor samples.

The sequence is that of KCNQ1 downstream neighbor protein (KCNQ1DN) from Homo sapiens (Human).